A 488-amino-acid chain; its full sequence is Glutamyl-tRNA(Gln) amidotransferase subunit A (488 aa).

Active-site charge relay system residues include Lys-77 and Ser-152. Ser-176 (acyl-ester intermediate) is an active-site residue.

Belongs to the amidase family. GatA subfamily. In terms of assembly, heterotrimer of A, B and C subunits.

It carries out the reaction L-glutamyl-tRNA(Gln) + L-glutamine + ATP + H2O = L-glutaminyl-tRNA(Gln) + L-glutamate + ADP + phosphate + H(+). Allows the formation of correctly charged Gln-tRNA(Gln) through the transamidation of misacylated Glu-tRNA(Gln) in organisms which lack glutaminyl-tRNA synthetase. The reaction takes place in the presence of glutamine and ATP through an activated gamma-phospho-Glu-tRNA(Gln). The chain is Glutamyl-tRNA(Gln) amidotransferase subunit A from Streptococcus pyogenes serotype M5 (strain Manfredo).